The sequence spans 131 residues: Glycine cleavage system H protein (131 aa).

A Lipoyl-binding domain is found at 24-106 (TVRVGITDYA…YGEGWLVELQ (83 aa)). An N6-lipoyllysine modification is found at Lys65.

This sequence belongs to the GcvH family. As to quaternary structure, the glycine cleavage system is composed of four proteins: P, T, L and H. The cofactor is (R)-lipoate.

Functionally, the glycine cleavage system catalyzes the degradation of glycine. The H protein shuttles the methylamine group of glycine from the P protein to the T protein. The polypeptide is Glycine cleavage system H protein (Mycolicibacterium gilvum (strain PYR-GCK) (Mycobacterium gilvum (strain PYR-GCK))).